The following is a 128-amino-acid chain: Disintegrin lebein-2-alpha (128 aa).

Positions 1–20 (MIQVLLVTICLAVFPFHGSS) are cleaved as a signal peptide. Positions 21–46 (IILESGNVNDYEVVYPKKVTLLPTGA) are excised as a propeptide. The 65-residue stretch at 47–111 (MNSANPCCDP…SDCPRNPWKS (65 aa)) folds into the Disintegrin domain. 4 disulfides stabilise this stretch: Cys-53/Cys-76, Cys-67/Cys-73, Cys-72/Cys-97, and Cys-85/Cys-104. Positions 89–91 (MLD) match the Cell attachment site; atypical (MLD) motif. Positions 112–128 (EEDEMKWSATAKGSVLM) are excised as a propeptide.

The protein belongs to the disintegrin family. Dimeric disintegrin subfamily. As to quaternary structure, heterodimer with subunit beta; disulfide-linked. In terms of tissue distribution, expressed by the venom gland.

Its subcellular location is the secreted. Its function is as follows. Inhibits ADP-induced human platelet aggregation. Antagonist of alpha-IIb/beta-3 (ITGA2B/ITGB3). Also avidly binds to the laminin-binding beta-1 integrins (alpha-3/beta-1 (ITGA3/ITGB1), alpha-6/beta-1 (ITGA6/ITGB1), and alpha-7/beta-1 (ITGA7/ITGB1)) in an RGD-independent manner. This Macrovipera lebetinus (Levantine viper) protein is Disintegrin lebein-2-alpha.